Consider the following 119-residue polypeptide: Gas vesicle protein O1 (119 aa).

Residues 1–12 (MADPANDRSERE) show a composition bias toward basic and acidic residues. The segment at 1 to 48 (MADPANDRSEREEGGEDDETPPASDGNPSPSANSFTLSNAQTRAREAA) is disordered. Positions 26–42 (GNPSPSANSFTLSNAQT) are enriched in polar residues.

It belongs to the gas vesicle GvpO family. In terms of assembly, forms homodimers, forms a GvpN1-GvpO1 heterodimer, interacts with GvpC1 (via the latter's C-terminus), GvpF1, GvpI1 and GvpL1, might interact with GvpA1.

The protein resides in the gas vesicle. The protein localises to the cytoplasm. Its function is as follows. A minor component of the gas vesicle, also found in soluble extracts. May play a role in transcription and/or RNA stability and in GV assembly. Gas vesicles are hollow, gas filled proteinaceous nanostructures found in several microbial planktonic microorganisms. They allow positioning of halobacteria at the optimal depth for growth in the poorly aerated, shallow brine pools of their habitat. Expression of a 9.5 kb p-vac DNA fragment containing 2 divergently transcribed regions (gvpD-gvpE-gvpF-gvpG-gvpH-gvpI-gvpJ-gvpK-gvpL-gvpM and gvpA-gvpC-gvpN-gvpO) allows H.volcanii to produce gas vesicles. A minimal gas vesicle can be made in H.volcanii by gvpA1-gvpO1 gvpF1-gvpG1-gvpJ1-gvpK1-gvpL1-gvpM1; lack of enough GvpJ1 prevents formation. The same region restores gas vesicle production in H.halobium without the p-vac locus, but it still has the c-vac locus. The chain is Gas vesicle protein O1 from Halobacterium salinarum (strain ATCC 700922 / JCM 11081 / NRC-1) (Halobacterium halobium).